Reading from the N-terminus, the 143-residue chain is uncharacterized protein (143 aa).

The HTH marR-type domain maps to 11-139 (EYELTTFIRR…FGELLQRMNK (129 aa)). Positions 53–76 (VKELAESFKLDISTLSRQAAALEA) form a DNA-binding region, H-T-H motif.

This is an uncharacterized protein from Bacillus subtilis (strain 168).